A 425-amino-acid polypeptide reads, in one-letter code: UDP-N-acetylglucosamine 1-carboxyvinyltransferase (425 aa).

23-24 (KN) lines the phosphoenolpyruvate pocket. R100 contacts UDP-N-acetyl-alpha-D-glucosamine. The Proton donor role is filled by C124. A 2-(S-cysteinyl)pyruvic acid O-phosphothioketal modification is found at C124. Residues D313 and I335 each coordinate UDP-N-acetyl-alpha-D-glucosamine.

The protein belongs to the EPSP synthase family. MurA subfamily.

Its subcellular location is the cytoplasm. The catalysed reaction is phosphoenolpyruvate + UDP-N-acetyl-alpha-D-glucosamine = UDP-N-acetyl-3-O-(1-carboxyvinyl)-alpha-D-glucosamine + phosphate. Its pathway is cell wall biogenesis; peptidoglycan biosynthesis. In terms of biological role, cell wall formation. Adds enolpyruvyl to UDP-N-acetylglucosamine. The sequence is that of UDP-N-acetylglucosamine 1-carboxyvinyltransferase from Wolbachia sp. subsp. Brugia malayi (strain TRS).